The primary structure comprises 91 residues: Acylphosphatase (91 aa).

One can recognise an Acylphosphatase-like domain in the interval 3–89 (TLLVRISGKV…PDQPGFSQKP (87 aa)). Catalysis depends on residues arginine 18 and asparagine 36.

The protein belongs to the acylphosphatase family.

The enzyme catalyses an acyl phosphate + H2O = a carboxylate + phosphate + H(+). The sequence is that of Acylphosphatase (acyP) from Rhodospirillum rubrum (strain ATCC 11170 / ATH 1.1.1 / DSM 467 / LMG 4362 / NCIMB 8255 / S1).